The chain runs to 598 residues: Integrator complex subunit 11 (598 aa).

Zn(2+) contacts are provided by histidine 68, histidine 70, aspartate 72, histidine 73, histidine 157, and aspartate 178. Residues 68 to 73 carry the HXHXDH motif motif; the sequence is HFHLDH. Residue glutamate 203 is part of the active site. Histidine 414 lines the Zn(2+) pocket. The short motif at 470 to 480 is the Nuclear localization signal element; sequence PLPDAKRPRTM.

The protein belongs to the metallo-beta-lactamase superfamily. RNA-metabolizing metallo-beta-lactamase-like family. INTS11 subfamily. As to quaternary structure, component of the Integrator complex, composed of core subunits INTS1, INTS2, INTS3, INTS4, INTS5, INTS6, INTS7, INTS8, INTS9/RC74, INTS10, INTS11/CPSF3L, INTS12, INTS13, INTS14 and INTS15. The core complex associates with protein phosphatase 2A subunits PPP2CA and PPP2R1A, to form the Integrator-PP2A (INTAC) complex. INTS11 is part of the RNA endonuclease subcomplex, composed of INTS4, INTS9, INTS11 and inositol hexakisphosphate (InsP6). The cofactor is Zn(2+).

The protein localises to the nucleus. It is found in the cytoplasm. Functionally, RNA endonuclease component of the integrator complex, a multiprotein complex that terminates RNA polymerase II (Pol II) transcription in the promoter-proximal region of genes. The integrator complex provides a quality checkpoint during transcription elongation by driving premature transcription termination of transcripts that are unfavorably configured for transcriptional elongation: the complex terminates transcription by (1) catalyzing dephosphorylation of the C-terminal domain (CTD) of Pol II subunit POLR2A/RPB1 and SUPT5H/SPT5, (2) degrading the exiting nascent RNA transcript via endonuclease activity and (3) promoting the release of Pol II from bound DNA. The integrator complex is also involved in terminating the synthesis of non-coding Pol II transcripts, such as enhancer RNAs (eRNAs), small nuclear RNAs (snRNAs), telomerase RNAs and long non-coding RNAs (lncRNAs). Within the integrator complex, INTS11 constitutes the RNA endonuclease subunit that degrades exiting nascent RNA transcripts. The polypeptide is Integrator complex subunit 11 (cpsf3l) (Danio rerio (Zebrafish)).